We begin with the raw amino-acid sequence, 365 residues long: MPLSNRSTLTQYLIEERRRFPGASGELNALILDVSLACKAIARAVAFGELGDALGDAAAMPTGGAVNVQGEVQKKLDVLSNEVFIRRNEWSGSLAGMASEEMETPYQIPGQYPRGKYLLVFDPLDGSSNIDVNVSVGSIFSILRAPQDVIDSGRDVTEADFLQPGAAQVAAGYALYGPTTMLMLTVGNGVAGFTLNPTLGEFMLTHANVTVPADTREFAINASNARFWEPPVKRYVDECLAGATGPRGKDFNMRWIASMVAEAHRILMRGGVFMYPRDTKDASKPGRLRLLYEANPIGMLMEQAGGRASTGRQPMLGVKPTSLHQRIGLVFGSKNEVERIERYHHEPVTREFATPLFAERSLFRD.

Glutamate 100, aspartate 122, leucine 124, and aspartate 125 together coordinate Mg(2+). Residues 125–128 and asparagine 221 contribute to the substrate site; that span reads DGSS. Residue glutamate 293 coordinates Mg(2+).

It belongs to the FBPase class 1 family. In terms of assembly, homotetramer. Requires Mg(2+) as cofactor.

Its subcellular location is the cytoplasm. It carries out the reaction beta-D-fructose 1,6-bisphosphate + H2O = beta-D-fructose 6-phosphate + phosphate. Its pathway is carbohydrate biosynthesis; gluconeogenesis. This chain is Fructose-1,6-bisphosphatase class 1 2, found in Leptothrix cholodnii (strain ATCC 51168 / LMG 8142 / SP-6) (Leptothrix discophora (strain SP-6)).